A 592-amino-acid polypeptide reads, in one-letter code: Autophagy-related protein 22-1 (592 aa).

4 helical membrane-spanning segments follow: residues 31–51 (YGWA…PITL), 108–128 (TASF…VIII), 143–163 (LLIV…VVVP), and 167–187 (LLGG…FVLL). N-linked (GlcNAc...) asparagine glycosylation is present at Asn213. Helical transmembrane passes span 271-291 (IGIG…VVVV), 301-321 (LVLF…SLWL), 364-384 (IVIF…VSGT), 398-418 (AALG…AFSW), 433-453 (IIAC…GFIP), 468-490 (MYPL…RSFF), 502-524 (FYAL…VGAI), and 534-554 (AFVF…LVDV). Positions 572 to 592 (PQGSEYGAISDDQTTEDPIEE) are disordered.

It belongs to the ATG22 family.

It localises to the vacuole membrane. In terms of biological role, vacuolar effluxer which mediate the efflux of amino acids resulting from autophagic degradation. The release of autophagic amino acids allows the maintenance of protein synthesis and viability during nitrogen starvation. In Penicillium rubens (strain ATCC 28089 / DSM 1075 / NRRL 1951 / Wisconsin 54-1255) (Penicillium chrysogenum), this protein is Autophagy-related protein 22-1 (atg22-1).